A 442-amino-acid polypeptide reads, in one-letter code: tRNA-2-methylthio-N(6)-dimethylallyladenosine synthase (442 aa).

In terms of domain architecture, MTTase N-terminal spans Lys-3–Ile-120. Positions 12, 49, 83, 157, 161, and 164 each coordinate [4Fe-4S] cluster. The Radical SAM core domain occupies Arg-143 to Glu-375. The 65-residue stretch at Arg-378 to Gln-442 folds into the TRAM domain.

It belongs to the methylthiotransferase family. MiaB subfamily. In terms of assembly, monomer. It depends on [4Fe-4S] cluster as a cofactor.

It localises to the cytoplasm. The enzyme catalyses N(6)-dimethylallyladenosine(37) in tRNA + (sulfur carrier)-SH + AH2 + 2 S-adenosyl-L-methionine = 2-methylsulfanyl-N(6)-dimethylallyladenosine(37) in tRNA + (sulfur carrier)-H + 5'-deoxyadenosine + L-methionine + A + S-adenosyl-L-homocysteine + 2 H(+). Catalyzes the methylthiolation of N6-(dimethylallyl)adenosine (i(6)A), leading to the formation of 2-methylthio-N6-(dimethylallyl)adenosine (ms(2)i(6)A) at position 37 in tRNAs that read codons beginning with uridine. The protein is tRNA-2-methylthio-N(6)-dimethylallyladenosine synthase of Pseudomonas savastanoi pv. phaseolicola (strain 1448A / Race 6) (Pseudomonas syringae pv. phaseolicola (strain 1448A / Race 6)).